Here is a 278-residue protein sequence, read N- to C-terminus: 4-deoxy-L-threo-5-hexosulose-uronate ketol-isomerase (278 aa).

4 residues coordinate Zn(2+): His-196, His-198, Glu-203, and His-245.

This sequence belongs to the KduI family. Zn(2+) is required as a cofactor.

The catalysed reaction is 5-dehydro-4-deoxy-D-glucuronate = 3-deoxy-D-glycero-2,5-hexodiulosonate. It participates in glycan metabolism; pectin degradation; 2-dehydro-3-deoxy-D-gluconate from pectin: step 4/5. In terms of biological role, catalyzes the isomerization of 5-dehydro-4-deoxy-D-glucuronate to 3-deoxy-D-glycero-2,5-hexodiulosonate. This is 4-deoxy-L-threo-5-hexosulose-uronate ketol-isomerase from Salmonella heidelberg (strain SL476).